Consider the following 642-residue polypeptide: Hemagglutinin-esterase-fusion glycoprotein (642 aa).

A signal peptide is located at residue Ala1. A fusion domain-1 region spans residues 2-27 (EKIKICLQKQVNSSFSLHNGFGGNLY). Residues 2–617 (EKIKICLQKQ…QSDPFYWGSS (616 aa)) are Extracellular-facing. Intrachain disulfides connect Cys7-Cys570, Cys107-Cys152, Cys127-Cys175, Cys197-Cys239, Cys216-Cys303, Cys224-Cys276, and Cys333-Cys339. Residues Asn13 and Asn48 are each glycosylated (N-linked (GlcNAc...) asparagine; by host). An esterase domain-1 region spans residues 28–138 (ATEEKRMFEL…RKNWTDIKLN (111 aa)). Ser58 functions as the Nucleophile in the catalytic mechanism. An N-linked (GlcNAc...) asparagine; by host glycan is attached at Asn131. Residues 138–297 (NFQKSIYELA…VRSSPRFLLM (160 aa)) form an N-acetyl-9-O-acetylneuraminic acid binding region. The segment at 298 to 352 (PERSYCFDMKEKGLVTAVQSIWGKGRKSDYAVDQACLSTPGCMLIQKQKPYIGEA) is esterase domain-2. Residues Asp353 and His356 each act as charge relay system in the active site. The tract at residues 353–638 (DDHHGDQEMR…AALVISGIAI (286 aa)) is fusion domain-2. Asn382 carries N-linked (GlcNAc...) asparagine; by host glycosylation. Residues 618–638 (LGLAITTPISLAALVISGIAI) traverse the membrane as a helical segment. Over 639 to 642 (CRTK) the chain is Cytoplasmic.

This sequence belongs to the influenza type C/coronaviruses hemagglutinin-esterase family. In terms of assembly, homotrimer of disulfide-linked HEF1-HEF2. In natural infection, inactive HEF is matured into HEF1 and HEF2 outside the cell by one or more trypsin-like, arginine-specific endoprotease.

It localises to the virion membrane. The protein resides in the host cell membrane. It carries out the reaction N-acetyl-9-O-acetylneuraminate + H2O = N-acetylneuraminate + acetate + H(+). The catalysed reaction is N-acetyl-4-O-acetylneuraminate + H2O = N-acetylneuraminate + acetate + H(+). Binds to the N-acetyl-9-O-acetylneuraminic acid residues on the cell surface, bringing about the attachment of the virus particle to the cell. Plays a major role in the determination of host range restriction and virulence. Class I viral fusion protein. Responsible for penetration of the virus into the cell cytoplasm by mediating the fusion of the membrane of the endocytosed virus particle with the endosomal membrane. Low pH in endosomes induce an irreversible conformational change in HEF2, releasing the fusion hydrophobic peptide. Several trimers are required to form a competent fusion pore. Displays a receptor-destroying activity which is a neuraminidate-O-acetyl esterase. This activity cleaves off any receptor on the cell surface, which would otherwise prevent virions release. These cleavages prevent self-aggregation and ensure the efficient spread of the progeny virus from cell to cell. The sequence is that of Hemagglutinin-esterase-fusion glycoprotein (HE) from Influenza C virus (strain C/England/892/1983).